The chain runs to 99 residues: Monothiol glutaredoxin-S11 (99 aa).

Positions 1 to 99 constitute a Glutaredoxin domain; the sequence is MDKVMRMSSE…LVPLVKPYLC (99 aa). A [2Fe-2S] cluster-binding site is contributed by Cys-21.

It belongs to the glutaredoxin family. CC-type subfamily.

The protein localises to the cytoplasm. In terms of biological role, may only reduce GSH-thiol disulfides, but not protein disulfides. The polypeptide is Monothiol glutaredoxin-S11 (GRXS11) (Arabidopsis thaliana (Mouse-ear cress)).